The sequence spans 452 residues: Multifunctional glycoside hydrolase (452 aa).

Substrate contacts are provided by glutamine 17, histidine 118, and asparagine 162. Glutamate 163 acts as the Proton donor in catalysis. Substrate is bound at residue tyrosine 303. Catalysis depends on glutamate 361, which acts as the Nucleophile. Substrate-binding positions include tryptophan 407 and 414–415; that span reads EW.

The protein belongs to the glycosyl hydrolase 1 family. In terms of assembly, monomer. Homotrimer.

The enzyme catalyses Hydrolysis of terminal, non-reducing beta-D-glucosyl residues with release of beta-D-glucose.. It carries out the reaction Hydrolysis of terminal non-reducing beta-D-galactose residues in beta-D-galactosides.. It catalyses the reaction Hydrolysis of (1-&gt;4)-beta-D-xylans, to remove successive D-xylose residues from the non-reducing termini.. The catalysed reaction is Hydrolysis of (1-&gt;4)-linkages in (1-&gt;4)-beta-D-glucans, to remove successive glucose units.. The enzyme catalyses Hydrolysis of (1-&gt;4)-beta-D-glucosidic linkages in cellulose and cellotetraose, releasing cellobiose from the non-reducing ends of the chains.. It functions in the pathway glycan metabolism; beta-D-glucan degradation. It participates in glycan metabolism; cellulose degradation. Slight activation by Mn(2+), Ni(2+) and K(+). Slight inhibition by Fe(3+), Zn(2+), Co(2+), Mg(2+), Cu(2+), Na(+) and NH4(+). Functionally, has high beta-D-glucosidase, exoglucanase, beta-D-xylosidase, beta-D-galactosidase, and transgalactosylation activities in vitro. Has a very broad substrate specificity with the highest activity with p-nitrophenyl beta-D-galactopyranoside (pNPGal) as substrate. Active with pNP-beta-D-glucopyranoside (pNPGlu), pNP-beta-D-cellobioside (pNPC), lactose, pNP-beta-D-xylopyranoside (pNPX) and cellobiose in the order of decreasing activity, respectively. Very low activity with soluble polysaccharides synanthrin and locust bean gum. Very low, but detectable activity with insoluble substrates such as cotton and filter paper. No activity with pNP-alpha-L-arabinofuranoside (pNPAr) or carboxymethylcellulose (CMC) as substrates. Synthesizes galactooligosaccharides (GalOS) from lactose. Hydrolyzes pretreated corn stover releasing both glucose and xylose. This multifunctional enzyme may provide C.owensensis the benefit of utilizing a wide variety of available carbon sources in its natural growing environment as the ability to convert a wide range of soluble oligosaccharides to monoses is required in order to assimilate them. The polypeptide is Multifunctional glycoside hydrolase (Caldicellulosiruptor owensensis (strain ATCC 700167 / DSM 13100 / OL)).